The chain runs to 1051 residues: Carbamoyl phosphate synthase large chain (1051 aa).

The interval 1–399 is carboxyphosphate synthetic domain; the sequence is MKETPKKVLV…SLQKAVRMLD (399 aa). ATP is bound by residues R127, R167, G173, G174, K206, L208, E213, G239, V240, H241, Q282, and E296. The ATP-grasp 1 domain occupies 131-325; the sequence is RETMIENNLP…LAYVSAKLAL (195 aa). Residues Q282, E296, and N298 each coordinate Mg(2+). Mn(2+) is bound by residues Q282, E296, and N298. Positions 400–548 are oligomerization domain; sequence IGEPGVVGGK…LTYNGTEDDL (149 aa). The segment at 549–930 is carbamoyl phosphate synthetic domain; the sequence is EFSQGNKLLI…LKSWLSSIPN (382 aa). Positions 673–863 constitute an ATP-grasp 2 domain; that stretch reads SKLLDKLGIS…LINEAMKAIF (191 aa). R709, K748, I750, E755, G779, V780, H781, S782, Q822, and E834 together coordinate ATP. Residues Q822, E834, and N836 each coordinate Mg(2+). Mn(2+) is bound by residues Q822, E834, and N836. In terms of domain architecture, MGS-like spans 930-1051; it reads NRIPNKNGIA…FEISEYGGGI (122 aa). The interval 931–1051 is allosteric domain; it reads RIPNKNGIAL…FEISEYGGGI (121 aa).

It belongs to the CarB family. Composed of two chains; the small (or glutamine) chain promotes the hydrolysis of glutamine to ammonia, which is used by the large (or ammonia) chain to synthesize carbamoyl phosphate. Tetramer of heterodimers (alpha,beta)4. The cofactor is Mg(2+). Requires Mn(2+) as cofactor.

The enzyme catalyses hydrogencarbonate + L-glutamine + 2 ATP + H2O = carbamoyl phosphate + L-glutamate + 2 ADP + phosphate + 2 H(+). It catalyses the reaction hydrogencarbonate + NH4(+) + 2 ATP = carbamoyl phosphate + 2 ADP + phosphate + 2 H(+). It functions in the pathway amino-acid biosynthesis; L-arginine biosynthesis; carbamoyl phosphate from bicarbonate: step 1/1. Its pathway is pyrimidine metabolism; UMP biosynthesis via de novo pathway; (S)-dihydroorotate from bicarbonate: step 1/3. Large subunit of the glutamine-dependent carbamoyl phosphate synthetase (CPSase). CPSase catalyzes the formation of carbamoyl phosphate from the ammonia moiety of glutamine, carbonate, and phosphate donated by ATP, constituting the first step of 2 biosynthetic pathways, one leading to arginine and/or urea and the other to pyrimidine nucleotides. The large subunit (synthetase) binds the substrates ammonia (free or transferred from glutamine from the small subunit), hydrogencarbonate and ATP and carries out an ATP-coupled ligase reaction, activating hydrogencarbonate by forming carboxy phosphate which reacts with ammonia to form carbamoyl phosphate. This chain is Carbamoyl phosphate synthase large chain, found in Saccharolobus islandicus (strain L.S.2.15 / Lassen #1) (Sulfolobus islandicus).